The following is a 488-amino-acid chain: Malonate-semialdehyde dehydrogenase (488 aa).

NAD(+) contacts are provided by alanine 150, phenylalanine 152, lysine 176, glutamate 179, arginine 180, serine 229, and threonine 251. Cysteine 284 serves as the catalytic Nucleophile. Glutamate 382 serves as a coordination point for NAD(+).

This sequence belongs to the aldehyde dehydrogenase family. IolA subfamily. Homotetramer.

The catalysed reaction is 3-oxopropanoate + NAD(+) + CoA + H2O = hydrogencarbonate + acetyl-CoA + NADH + H(+). It catalyses the reaction 2-methyl-3-oxopropanoate + NAD(+) + CoA + H2O = propanoyl-CoA + hydrogencarbonate + NADH + H(+). It functions in the pathway polyol metabolism; myo-inositol degradation into acetyl-CoA; acetyl-CoA from myo-inositol: step 7/7. Functionally, catalyzes the oxidation of malonate semialdehyde (MSA) and methylmalonate semialdehyde (MMSA) into acetyl-CoA and propanoyl-CoA, respectively. Is involved in a myo-inositol catabolic pathway. Bicarbonate, and not CO2, is the end-product of the enzymatic reaction. The chain is Malonate-semialdehyde dehydrogenase from Listeria monocytogenes serotype 4b (strain F2365).